Here is a 338-residue protein sequence, read N- to C-terminus: GTPase Obg (338 aa).

The Obg domain occupies 1 to 159 (MQFIDEVKIH…RWLRLELKLM (159 aa)). The tract at residues 66 to 91 (KAGRGKNGMGKDRHGANGDDLTIPVP) is disordered. The OBG-type G domain maps to 160 to 331 (ADVGLLGFPN…LLDEIARHLW (172 aa)). Residues 166 to 173 (GFPNVGKS), 191 to 195 (FTTIK), 213 to 216 (DIPG), 283 to 286 (NKID), and 312 to 314 (SAA) contribute to the GTP site. Serine 173 and threonine 193 together coordinate Mg(2+).

The protein belongs to the TRAFAC class OBG-HflX-like GTPase superfamily. OBG GTPase family. In terms of assembly, monomer. Mg(2+) is required as a cofactor.

The protein localises to the cytoplasm. Functionally, an essential GTPase which binds GTP, GDP and possibly (p)ppGpp with moderate affinity, with high nucleotide exchange rates and a fairly low GTP hydrolysis rate. Plays a role in control of the cell cycle, stress response, ribosome biogenesis and in those bacteria that undergo differentiation, in morphogenesis control. In Geobacter metallireducens (strain ATCC 53774 / DSM 7210 / GS-15), this protein is GTPase Obg.